A 138-amino-acid chain; its full sequence is Regulator of ribonuclease activity B (138 aa).

The disordered stretch occupies residues 114-138; that stretch reads YFEDPNGEDGDDEDFVDEDDDGVRH. The segment covering 118–138 has biased composition (acidic residues); sequence PNGEDGDDEDFVDEDDDGVRH.

Belongs to the RraB family. Interacts with the C-terminal region of Rne.

It is found in the cytoplasm. Globally modulates RNA abundance by binding to RNase E (Rne) and regulating its endonucleolytic activity. Can modulate Rne action in a substrate-dependent manner by altering the composition of the degradosome. This chain is Regulator of ribonuclease activity B, found in Escherichia coli (strain K12).